Here is a 207-residue protein sequence, read N- to C-terminus: Urease accessory protein UreG (207 aa).

14–21 provides a ligand contact to GTP; the sequence is GPVGSGKT.

This sequence belongs to the SIMIBI class G3E GTPase family. UreG subfamily. In terms of assembly, homodimer. UreD, UreF and UreG form a complex that acts as a GTP-hydrolysis-dependent molecular chaperone, activating the urease apoprotein by helping to assemble the nickel containing metallocenter of UreC. The UreE protein probably delivers the nickel.

It localises to the cytoplasm. In terms of biological role, facilitates the functional incorporation of the urease nickel metallocenter. This process requires GTP hydrolysis, probably effectuated by UreG. This Rhodopseudomonas palustris (strain BisB18) protein is Urease accessory protein UreG.